Reading from the N-terminus, the 811-residue chain is DNA mismatch repair protein MutS (811 aa).

583–590 (GPNMAGKS) lines the ATP pocket.

Belongs to the DNA mismatch repair MutS family.

This protein is involved in the repair of mismatches in DNA. It is possible that it carries out the mismatch recognition step. This protein has a weak ATPase activity. This Thermus thermophilus (strain ATCC BAA-163 / DSM 7039 / HB27) protein is DNA mismatch repair protein MutS.